The sequence spans 491 residues: Dipeptide and tripeptide permease B (491 aa).

Over 1–26 the chain is Cytoplasmic; the sequence is MNNTAPGLLHQPKPFFMIFFVELWER. A helical membrane pass occupies residues 27–47; sequence FGYYGVQGILAVFFVKQLGFS. At 48–51 the chain is on the periplasmic side; that stretch reads QEQA. The helical transmembrane segment at 52-72 threads the bilayer; that stretch reads FITFGAFAALVYGLISIGGYV. Residues 73 to 81 are Cytoplasmic-facing; it reads GDHLLGTKR. A helical membrane pass occupies residues 82–102; it reads TMVLGAIVLALGYFMTGMSLL. At 103-105 the chain is on the periplasmic side; sequence KPE. The chain crosses the membrane as a helical span at residues 106-126; it reads MIFIALGTIAVGNGLFKANPA. The Cytoplasmic segment spans residues 127-145; that stretch reads SLLSKCYPPKDPRLDGAFT. The helical transmembrane segment at 146–166 threads the bilayer; the sequence is LFYMSINIGSLLSLSLAPIIA. Residues 167–171 are Periplasmic-facing; that stretch reads ERFGY. Residues 172-192 traverse the membrane as a helical segment; sequence AVTYNLCGLGLIIALLVYFAC. Topologically, residues 193-210 are cytoplasmic; the sequence is RGMVRSIGSAPDHQPLNY. A helical transmembrane segment spans residues 211–231; it reads GKLLLVLAGAVVMIFLCAWLM. Position 232 (His-232) is a topological domain, periplasmic. Residues 233-253 form a helical membrane-spanning segment; sequence NVGVANIVLIAVSAVVLYFFF. Topologically, residues 254 to 266 are cytoplasmic; that stretch reads REAFKQDKTGRNR. A helical membrane pass occupies residues 267–287; it reads MFVAFILMIEAVLFYILYAQM. Topologically, residues 288–312 are periplasmic; the sequence is PTSLNFFAINNVRHELLGFAINPVS. Residues 313–335 form a helical membrane-spanning segment; sequence FQALNPFWVVVASPILASIYTRL. Over 336 to 349 the chain is Cytoplasmic; sequence GSRGRDMTMPTKFT. The chain crosses the membrane as a helical span at residues 350–370; it reads LGMLLCSLGFLTAAAAGMWFA. Topologically, residues 371 to 378 are periplasmic; sequence DAQGLTSP. Residues 379–399 form a helical membrane-spanning segment; it reads WFVVLVYLFQSLGELMISALG. Over 400 to 423 the chain is Cytoplasmic; sequence LAMVAALVPQYLMGFILGMWFLTQ. A helical membrane pass occupies residues 424-444; the sequence is AAAFLLGGYVATFTAVPAGIH. At 445 to 454 the chain is on the periplasmic side; that stretch reads DPLQTLPIYT. Residues 455–475 form a helical membrane-spanning segment; that stretch reads GVFGKIGIATLIVTLVMAAMV. Residues 476–491 lie on the Cytoplasmic side of the membrane; it reads PWLNRMMNTPADGQKA.

The protein belongs to the major facilitator superfamily. Proton-dependent oligopeptide transporter (POT/PTR) (TC 2.A.17) family. DtpB subfamily.

It localises to the cell inner membrane. Functionally, proton-dependent permease that transports di- and tripeptides. This chain is Dipeptide and tripeptide permease B, found in Edwardsiella piscicida.